The chain runs to 88 residues: UPF0298 protein BcerKBAB4_3759 (88 aa).

This sequence belongs to the UPF0298 family.

It is found in the cytoplasm. The polypeptide is UPF0298 protein BcerKBAB4_3759 (Bacillus mycoides (strain KBAB4) (Bacillus weihenstephanensis)).